The sequence spans 609 residues: UvrABC system protein C (609 aa).

Positions 15–92 constitute a GIY-YIG domain; it reads TGSGVYQMQD…IKQFRPRYNV (78 aa). A UVR domain is found at 202-237; that stretch reads DQVIIKLTERMEVTSENLVFEEAAHYRDQIRQLRRL.

Belongs to the UvrC family. As to quaternary structure, interacts with UvrB in an incision complex.

The protein resides in the cytoplasm. Its function is as follows. The UvrABC repair system catalyzes the recognition and processing of DNA lesions. UvrC both incises the 5' and 3' sides of the lesion. The N-terminal half is responsible for the 3' incision and the C-terminal half is responsible for the 5' incision. The chain is UvrABC system protein C from Coxiella burnetii (strain RSA 493 / Nine Mile phase I).